A 235-amino-acid chain; its full sequence is MAATTCFFFLFPFLLLLTLSRAATFEIVNRCSYTVWAAASKGDAALDAGGRQLNSGESWTINVEPGTKGGKIWARTDCYFDDSGRGICRTGDCGGLLQCKRFGRPPTTLAEFSLNQYGKDYIDISNIKGFNVPMDFSPTTRGCRGVRCAADIVGQCPAKLKAPGGGCNDACTVFQTSEYCCTTGKCGPTEYSRFFKRLCPDAFSYVLDKPTTVTCPGSSNYRVTFCPTALELEDE.

The signal sequence occupies residues 1–22 (MAATTCFFFLFPFLLLLTLSRA). 8 disulfide bridges follow: Cys31–Cys226, Cys78–Cys88, Cys93–Cys99, Cys143–Cys215, Cys148–Cys199, Cys156–Cys167, Cys171–Cys180, and Cys181–Cys186. Positions 230 to 235 (LELEDE) are cleaved as a propeptide — removed in mature form.

The protein belongs to the thaumatin family.

It is found in the cytoplasmic vesicle. Functionally, taste-modifying protein; intensely sweet-tasting. It is 100000 times sweeter than sucrose on a molar basis. This is Thaumatin II from Thaumatococcus daniellii (Katemfe).